The following is a 113-amino-acid chain: Ribonuclease P protein component (113 aa).

It belongs to the RnpA family. As to quaternary structure, consists of a catalytic RNA component (M1 or rnpB) and a protein subunit.

The catalysed reaction is Endonucleolytic cleavage of RNA, removing 5'-extranucleotides from tRNA precursor.. Functionally, RNaseP catalyzes the removal of the 5'-leader sequence from pre-tRNA to produce the mature 5'-terminus. It can also cleave other RNA substrates such as 4.5S RNA. The protein component plays an auxiliary but essential role in vivo by binding to the 5'-leader sequence and broadening the substrate specificity of the ribozyme. The chain is Ribonuclease P protein component from Clavibacter michiganensis subsp. michiganensis (strain NCPPB 382).